The primary structure comprises 91 residues: Small ribosomal subunit protein bS20 (91 aa).

It belongs to the bacterial ribosomal protein bS20 family.

Its function is as follows. Binds directly to 16S ribosomal RNA. This is Small ribosomal subunit protein bS20 from Thermosipho melanesiensis (strain DSM 12029 / CIP 104789 / BI429).